We begin with the raw amino-acid sequence, 655 residues long: SRSF protein kinase 1 (655 aa).

Positions 1-57 are disordered; that stretch reads MERKVLALQARKKRTKAKKDKAQRKSETQHRGSAPHSESDLPEQEEEILGSDDDEQE. Residues 10–22 are compositionally biased toward basic residues; it reads ARKKRTKAKKDKA. Residues 40-57 show a composition bias toward acidic residues; sequence DLPEQEEEILGSDDDEQE. Residue serine 51 is modified to Phosphoserine; by CK2. Residues 80–653 enclose the Protein kinase domain; that stretch reads YHVIRKLGWG…AAECLRHPWL (574 aa). ATP contacts are provided by residues 86 to 94, lysine 109, and 166 to 168; these read LGWGHFSTV and EVL. Aspartate 213 serves as the catalytic Proton acceptor. Disordered stretches follow at residues 238–341 and 397–417; these read WQRS…QDQT and FLSS…CTPI. The segment covering 265-276 has biased composition (basic residues); it reads KNKKKKLKKKQK. Basic and acidic residues-rich tracts occupy residues 277–288 and 304–318; these read RQAELLEKRMQE and NKQE…RPLK. Phosphoserine is present on residues serine 309, serine 311, and serine 333. Serine 555 carries the phosphoserine; by CK2 modification.

Belongs to the protein kinase superfamily. CMGC Ser/Thr protein kinase family. As to quaternary structure, monomer. Isoform 2 is found in a multisubunit complex containing seven proteins, named toposome, which separates entangled circular chromatin DNA during chromosome segregation. Isoform 2 interacts with DNAJC8 and AHSA1/AHA1 and this mediates formation of a complex with the Hsp70 /Hsp90 machinery. Isoform 1 is found in a complex with: DHX9, MOV10, MATR3, HNRNPU, NCL, DDX21, HSD17B4, PABPC1, HNRNPM, IGF2BP1, SYNCRIP, RPL3, VIM, YBX1, NPM1, HNRNPA2B1, HNRNPC, RPLP0, RPL7A and RALY. Isoform 2 binds to IGF2BP1, SYNCRIP, HNRNPA2B1 and HNRNPC. Isoform 1 and isoform 2 interact with SAFB which inhibits its activity. Isoform 2 interacts with SAFB2 which inhibits its activity. (Microbial infection) Isoform 2 interacts with HHV-1 ICP27 protein. Mg(2+) serves as cofactor. As to expression, isoform 2 is predominantly expressed in the testis but is also present at lower levels in heart, ovary, small intestine, liver, kidney, pancreas and skeletal muscle. Isoform 1 is only seen in the testis, at lower levels than isoform 2. Highly expressed in different erythroid and lymphoid cell lines, with isoform 2 being far more abundant than isoform 1.

Its subcellular location is the cytoplasm. It localises to the nucleus. It is found in the nucleus matrix. The protein localises to the microsome. The protein resides in the nucleoplasm. Its subcellular location is the nucleus speckle. It localises to the chromosome. It carries out the reaction L-seryl-[protein] + ATP = O-phospho-L-seryl-[protein] + ADP + H(+). The catalysed reaction is L-threonyl-[protein] + ATP = O-phospho-L-threonyl-[protein] + ADP + H(+). With respect to regulation, activated by phosphorylation on Ser-51 and Ser-555. Serine/arginine-rich protein-specific kinase which specifically phosphorylates its substrates at serine residues located in regions rich in arginine/serine dipeptides, known as RS domains and is involved in the phosphorylation of SR splicing factors and the regulation of splicing. Plays a central role in the regulatory network for splicing, controlling the intranuclear distribution of splicing factors in interphase cells and the reorganization of nuclear speckles during mitosis. Can influence additional steps of mRNA maturation, as well as other cellular activities, such as chromatin reorganization in somatic and sperm cells and cell cycle progression. Isoform 2 phosphorylates SFRS2, ZRSR2, LBR and PRM1. Isoform 2 phosphorylates SRSF1 using a directional (C-terminal to N-terminal) and a dual-track mechanism incorporating both processive phosphorylation (in which the kinase stays attached to the substrate after each round of phosphorylation) and distributive phosphorylation steps (in which the kinase and substrate dissociate after each phosphorylation event). The RS domain of SRSF1 binds first to a docking groove in the large lobe of the kinase domain of SRPK1. This induces certain structural changes in SRPK1 and/or RRM2 domain of SRSF1, allowing RRM2 to bind the kinase and initiate phosphorylation. The cycles continue for several phosphorylation steps in a processive manner (steps 1-8) until the last few phosphorylation steps (approximately steps 9-12). During that time, a mechanical stress induces the unfolding of the beta-4 motif in RRM2, which then docks at the docking groove of SRPK1. This also signals RRM2 to begin to dissociate, which facilitates SRSF1 dissociation after phosphorylation is completed. Isoform 2 can mediate hepatitis B virus (HBV) core protein phosphorylation. It plays a negative role in the regulation of HBV replication through a mechanism not involving the phosphorylation of the core protein but by reducing the packaging efficiency of the pregenomic RNA (pgRNA) without affecting the formation of the viral core particles. Isoform 1 and isoform 2 can induce splicing of exon 10 in MAPT/TAU. The ratio of isoform 1/isoform 2 plays a decisive role in determining cell fate in K-562 leukaemic cell line: isoform 2 favors proliferation where as isoform 1 favors differentiation. In Homo sapiens (Human), this protein is SRSF protein kinase 1.